Reading from the N-terminus, the 283-residue chain is 4-diphosphocytidyl-2-C-methyl-D-erythritol kinase (283 aa).

The active site involves lysine 10. 99–109 provides a ligand contact to ATP; that stretch reads PMGGGLGGGSS. Aspartate 141 is a catalytic residue.

It belongs to the GHMP kinase family. IspE subfamily. As to quaternary structure, homodimer.

It carries out the reaction 4-CDP-2-C-methyl-D-erythritol + ATP = 4-CDP-2-C-methyl-D-erythritol 2-phosphate + ADP + H(+). It functions in the pathway isoprenoid biosynthesis; isopentenyl diphosphate biosynthesis via DXP pathway; isopentenyl diphosphate from 1-deoxy-D-xylulose 5-phosphate: step 3/6. Its function is as follows. Catalyzes the phosphorylation of the position 2 hydroxy group of 4-diphosphocytidyl-2C-methyl-D-erythritol. In Escherichia coli O9:H4 (strain HS), this protein is 4-diphosphocytidyl-2-C-methyl-D-erythritol kinase.